We begin with the raw amino-acid sequence, 965 residues long: 26S proteasome non-ATPase regulatory subunit 1 (965 aa).

PC repeat units follow at residues 380 to 413 (NAVA…EGFG), 418 to 452 (GAML…EPVR), 454 to 488 (GACL…VSGE), 489 to 523 (SAGI…DKTQ), 560 to 595 (TGIC…DVKR), 630 to 664 (GAAM…FVRK), 665 to 706 (GALL…SLVK), and 708 to 738 (GAII…DMGS). Low complexity predominate over residues 836–856 (ASASSAAAAPSSSSTSGTAPA). Disordered regions lie at residues 836 to 889 (ASAS…LQNP) and 943 to 965 (TPAS…INDF). The span at 863–882 (EVDQPGKSKKEKAPEKDTKP) shows a compositional bias: basic and acidic residues.

Belongs to the proteasome subunit S1 family.

In terms of biological role, acts as a regulatory subunit of the 26 proteasome which is involved in the ATP-dependent degradation of ubiquitinated proteins. The polypeptide is 26S proteasome non-ATPase regulatory subunit 1 (rpn-2) (Caenorhabditis elegans).